The primary structure comprises 160 residues: uncharacterized protein (160 aa).

A helical membrane pass occupies residues 8–28; it reads LLFILVFISGFILFTVYSYTA.

The protein resides in the membrane. This is an uncharacterized protein from Escherichia coli (strain K12).